A 1315-amino-acid chain; its full sequence is Serine-aspartate repeat-containing protein D (1315 aa).

Residues 1–35 (MLNRENKTAITRKGMVSNRLNKFSIRKYTVGTASI) form the signal peptide. A YSIRK-G/S signaling motif motif is present at residues 23-34 (FSIRKYTVGTAS). The tract at residues 36 to 568 (LVGTTLIFGL…NNQSGGAGQE (533 aa)) is ligand binding A region. Positions 54-185 (ESTNKELNEA…NKKVDAKTES (132 aa)) are disordered. Polar residues-rich tracts occupy residues 62-71 (EATTSASDNQ) and 94-108 (EMVSSQGNETTSNGN). The span at 130-145 (KSDEQASPKSTNEDLN) shows a compositional bias: basic and acidic residues. 2 stretches are compositionally biased toward polar residues: residues 146–155 (TKQTISNQEA) and 163–173 (NKSVVNVQPTN). Positions 174–183 (EENKKVDAKT) are enriched in basic and acidic residues. CNA-B domains lie at 569–680 (VYKI…IYKP), 681–791 (KYNL…YKTP), 792–901 (KYNL…FYKP), 902–1012 (TYNL…YKTP), and 1013–1123 (KYSL…EEET). Disordered stretches follow at residues 857-883 (ETPSGYTPTQVGSGTDEGIDSNGTSTT), 972-992 (YTPTSVTSGNDTEKDSNGLTT), and 1078-1291 (EKPA…SNNA). 2 stretches are compositionally biased toward polar residues: residues 860–869 (SGYTPTQVGS) and 972–981 (YTPTSVTSGN). Acidic residues-rich tracts occupy residues 1091–1101 (TEDDKDADGGE), 1118–1134 (YYEEETSDSDSDSDSDS), 1142–1164 (SDSDSDSDSDSDSDSDSDSDSDS), and 1172–1254 (SDSD…DSDS). Residues 1278-1282 (LPETG) carry the LPXTG sorting signal motif. Thr-1281 is modified (pentaglycyl murein peptidoglycan amidated threonine). Positions 1282–1315 (GNENSGSNNATLFGGLFAALGSLLLFGRRKKQNK) are cleaved as a propeptide — removed by sortase.

This sequence belongs to the serine-aspartate repeat-containing protein (SDr) family. In terms of assembly, interacts with host DSG1; this interaction increases S.aureus adherence to keratinocytes. Anchored to the cell wall by sortase A.

The protein localises to the secreted. The protein resides in the cell wall. Its function is as follows. Cell surface-associated calcium-binding protein which plays an important role in adhesion and pathogenesis. Mediates interactions with components of the extracellular matrix such as host DSG1 to promote bacterial adhesion to host cells. Contributes to the resistance to killing by innate immune components such as neutrophils present in blood and thus attenuates bacterial clearance. The sequence is that of Serine-aspartate repeat-containing protein D (sdrD) from Staphylococcus aureus (strain Newman).